A 339-amino-acid polypeptide reads, in one-letter code: tRNA pseudouridine synthase D (339 aa).

Catalysis depends on Asp80, which acts as the Nucleophile. In terms of domain architecture, TRUD spans 155–311 (GFPNYFTEQR…AKGFSWAFEL (157 aa)).

The protein belongs to the pseudouridine synthase TruD family.

The enzyme catalyses uridine(13) in tRNA = pseudouridine(13) in tRNA. Its function is as follows. Responsible for synthesis of pseudouridine from uracil-13 in transfer RNAs. The chain is tRNA pseudouridine synthase D from Haemophilus influenzae (strain PittEE).